The primary structure comprises 518 residues: MNCQSGLRWLVTLCAFFQVGSARDTHESTRQCDKPVSQKDMNSFLWTVKRPRPFPPSYLFGTIHVPYTRVWDYIPESSKRAFQTSNSVFFELDLTDPLTISKLTSCQLLPNGENLQTLLPRDLYRRLKRHLDYVKHMMPFWMTADQRGRGLYADYLFNAIAGNWERKRPVWVMLMVNSLTEADVRSRGTPVLDLFLAQEAERLGKQTGAVERVEEQCHPLNGLNFSQVLFALNQTLLQHESLRAGILQGTFTTEDLIAHYNCGDLNSIIFNHDTSQLPHFINSSLPDHERLTAQQIDSYLRQELIYKRNERMARRVSALLQRNPNQSFFFAFGAGHFLGNHSVLDILRQEGYEVEHTPPQEPIIQSWSEREATTLNPTEDSFESVTEWTSETPELEEISQEELSHMLLPDSLSQLEEFGRYKHPRKTHHTHSRPRLFSDLWVRIGDSTTPHPSIRITNGYVTVEPPQIRQEQQQRLRERLKPLSEPTNPSALDSAAPNPTYALTCFLACLISQLLFAS.

The signal sequence occupies residues 1–22 (MNCQSGLRWLVTLCAFFQVGSA). Topologically, residues 23-499 (RDTHESTRQC…SALDSAAPNP (477 aa)) are extracellular. N-linked (GlcNAc...) asparagine glycosylation is found at N224, N233, N282, N325, and N340. A helical transmembrane segment spans residues 500–517 (TYALTCFLACLISQLLFA). Position 518 (S518) is a topological domain, cytoplasmic.

Belongs to the TIKI family. Requires Mn(2+) as cofactor. The cofactor is Co(2+).

It is found in the cell membrane. Its function is as follows. Metalloprotease that acts as a negative regulator of the Wnt signaling pathway by mediating the cleavage of the N-terminal residues of a subset of Wnt proteins. Following cleavage, Wnt proteins become oxidized and form large disulfide-bond oligomers, leading to their inactivation. This Danio rerio (Zebrafish) protein is Metalloprotease TIKI2 (trabd2b).